The sequence spans 474 residues: MKSIKRVEKVTSHLSDFGQWYTDICLKAELIAYSDVKGFIIYLPYGYALWENIQKYLNYEFQKTGHQNVYFPLVFSEKLFQKEKDHIQGFSPEAAMITSTGQKELFEKLVIRPTSEVLFSQYYAKIISSYRDLPKLYNQFCNVVRWEKATKPFLRGKEFLWQEGHTVHATEKEALDQTLFAIQLYEKLGKELLALPFVCGRKTEKEKFAGALITYSIEALMQDGQALQAGTSHYLGTNFAQSFQIQFQDQDHQNKYVHQTSWGVSTRLIGALIMVHSDDEGLILPPYIAPIQIVIIPLQPKNELVQAEAKKIFDDLKTTYRVHLDLQNKTPGWKFSQYELKGVPLRIEIGARDLAQGEVTIFQRYNNSKNNFSKNTFKAEIPKLLKTIHDKMYQKAQKHLEANRRQASTYQEFKDHLQKKGYVAMSISGMDAEIKIKTETGATARVILETPLITPNCPVTDKKAIQTVLFAKSY.

Belongs to the class-II aminoacyl-tRNA synthetase family. ProS type 3 subfamily. In terms of assembly, homodimer.

It localises to the cytoplasm. It carries out the reaction tRNA(Pro) + L-proline + ATP = L-prolyl-tRNA(Pro) + AMP + diphosphate. Catalyzes the attachment of proline to tRNA(Pro) in a two-step reaction: proline is first activated by ATP to form Pro-AMP and then transferred to the acceptor end of tRNA(Pro). In Phytoplasma australiense, this protein is Proline--tRNA ligase.